Consider the following 1905-residue polypeptide: Alpha-2-macroglobulin (1905 aa).

Positions 1–21 (MNKQYFLSLFSTLAVALTLSG) are cleaved as a signal peptide. A lipid anchor (N-palmitoyl cysteine) is attached at Cys-22. A lipid anchor (S-diacylglycerol cysteine) is attached at Cys-22. The segment at residues 1438 to 1441 (CTEQ) is a cross-link (isoglutamyl cysteine thioester (Cys-Gln)).

The protein belongs to the protease inhibitor I39 (alpha-2-macroglobulin) family. Bacterial alpha-2-macroglobulin subfamily.

The protein localises to the cell membrane. Its function is as follows. Protects the bacterial cell from host peptidases. This Pasteurella multocida (strain Pm70) protein is Alpha-2-macroglobulin.